Consider the following 71-residue polypeptide: Beta-defensin 124 (71 aa).

The N-terminal stretch at Met1–Ser22 is a signal peptide. Disulfide bonds link Cys27–Cys54, Cys34–Cys48, and Cys38–Cys55.

The protein belongs to the beta-defensin family.

Its subcellular location is the secreted. Its function is as follows. Has antibacterial activity. In Pan troglodytes (Chimpanzee), this protein is Beta-defensin 124 (DEFB124).